The chain runs to 193 residues: MRLCDRDIEQHLEEGKIVIEPRPDSSRISGVSVDVLLGNEFRVFQAHTAPYIDLSGPKEEVSAAIDRVMSDEIYIKDSEVFILHPGELALAVTHESVTLPDNIVGWLDGRSSLARLGLMVHVTAHRIDPGWSGRIVLEFYNGGRLPLALRPGMVIGALNFETMSGSAARPYNKRTNAKYKSQQGAVASRIDQD.

DCTP contacts are provided by residues 110–115, D128, 136–138, Y171, K178, and Q182; these read RSSLAR and VLE. E138 acts as the Proton donor/acceptor in catalysis.

This sequence belongs to the dCTP deaminase family. As to quaternary structure, homotrimer.

The catalysed reaction is dCTP + H2O + H(+) = dUTP + NH4(+). It participates in pyrimidine metabolism; dUMP biosynthesis; dUMP from dCTP (dUTP route): step 1/2. Catalyzes the deamination of dCTP to dUTP. This chain is dCTP deaminase, found in Tolumonas auensis (strain DSM 9187 / NBRC 110442 / TA 4).